Consider the following 89-residue polypeptide: Small ribosomal subunit protein uS15 (89 aa).

It belongs to the universal ribosomal protein uS15 family. As to quaternary structure, part of the 30S ribosomal subunit. Forms a bridge to the 50S subunit in the 70S ribosome, contacting the 23S rRNA.

In terms of biological role, one of the primary rRNA binding proteins, it binds directly to 16S rRNA where it helps nucleate assembly of the platform of the 30S subunit by binding and bridging several RNA helices of the 16S rRNA. Its function is as follows. Forms an intersubunit bridge (bridge B4) with the 23S rRNA of the 50S subunit in the ribosome. The sequence is that of Small ribosomal subunit protein uS15 from Chlamydia abortus (strain DSM 27085 / S26/3) (Chlamydophila abortus).